The sequence spans 78 residues: MFPIVEFCVSNLAQGSQEAKEILEKDPNLDVVEYGCLSYCGQCMQTMYALVNGEMVTANNPAELVENIYKFIDENELI.

The protein belongs to the UPF0349 family.

The protein is UPF0349 protein BLi03401/BL03152 of Bacillus licheniformis (strain ATCC 14580 / DSM 13 / JCM 2505 / CCUG 7422 / NBRC 12200 / NCIMB 9375 / NCTC 10341 / NRRL NRS-1264 / Gibson 46).